A 147-amino-acid chain; its full sequence is Transcriptional repressor NrdR (147 aa).

A zinc finger spans residues 3-34; the sequence is CPFCGHEDTQVAETRESDEGDVIRRRRRCPSC. Positions 49 to 139 constitute an ATP-cone domain; sequence PAIVKKDGSR…VYRSFEGVDE (91 aa).

This sequence belongs to the NrdR family. Zn(2+) serves as cofactor.

In terms of biological role, negatively regulates transcription of bacterial ribonucleotide reductase nrd genes and operons by binding to NrdR-boxes. The sequence is that of Transcriptional repressor NrdR from Methylibium petroleiphilum (strain ATCC BAA-1232 / LMG 22953 / PM1).